The sequence spans 306 residues: Glutaminase (306 aa).

Substrate-binding residues include serine 62, asparagine 114, glutamate 159, asparagine 166, tyrosine 190, tyrosine 242, and valine 260.

This sequence belongs to the glutaminase family. Homotetramer.

The catalysed reaction is L-glutamine + H2O = L-glutamate + NH4(+). The chain is Glutaminase from Clostridium tetani (strain Massachusetts / E88).